Here is a 125-residue protein sequence, read N- to C-terminus: MRHYEIVFMVHPDQSEQVPGMIERYTGSVKEAGGQVHRLEDWGRRQLAYPINKLHKAHYVLMNVEAPQQVIDELETTFRYNDAVLRSLVIHTKHAVTEASPMKAAKEERKPLAEVENNDFEDAEE.

Residues 96–125 (VTEASPMKAAKEERKPLAEVENNDFEDAEE) are disordered. Residues 104–113 (AAKEERKPLA) are compositionally biased toward basic and acidic residues. Over residues 116-125 (ENNDFEDAEE) the composition is skewed to acidic residues.

Belongs to the bacterial ribosomal protein bS6 family.

Functionally, binds together with bS18 to 16S ribosomal RNA. This chain is Small ribosomal subunit protein bS6, found in Haemophilus influenzae (strain 86-028NP).